The primary structure comprises 130 residues: UPF0102 protein Cthe_0758 (130 aa).

The protein belongs to the UPF0102 family.

In Acetivibrio thermocellus (strain ATCC 27405 / DSM 1237 / JCM 9322 / NBRC 103400 / NCIMB 10682 / NRRL B-4536 / VPI 7372) (Clostridium thermocellum), this protein is UPF0102 protein Cthe_0758.